The chain runs to 1217 residues: Splicing factor 3B subunit 3 (1217 aa).

The protein belongs to the RSE1 family. As to quaternary structure, component of the 17S U2 SnRNP complex, a ribonucleoprotein complex that contains small nuclear RNA (snRNA) U2 and a number of specific proteins. Part of the SF3B subcomplex of the 17S U2 SnRNP complex. SF3B associates with the splicing subcomplex SF3A and a 12S RNA unit to form the U2 small nuclear ribonucleoproteins complex (U2 snRNP). Component of the minor (U12-type spliceosome) spliceosome.

Its subcellular location is the nucleus. In terms of biological role, component of the 17S U2 SnRNP complex of the spliceosome, a large ribonucleoprotein complex that removes introns from transcribed pre-mRNAs. The 17S U2 SnRNP complex (1) directly participates in early spliceosome assembly and (2) mediates recognition of the intron branch site during pre-mRNA splicing by promoting the selection of the pre-mRNA branch-site adenosine, the nucleophile for the first step of splicing. Within the 17S U2 SnRNP complex, SF3B3 is part of the SF3B subcomplex, which is required for 'A' complex assembly formed by the stable binding of U2 snRNP to the branchpoint sequence in pre-mRNA. Also acts as a component of the minor spliceosome, which is involved in the splicing of U12-type introns in pre-mRNAs. The protein is Splicing factor 3B subunit 3 (sf3b3) of Danio rerio (Zebrafish).